The sequence spans 186 residues: NADH-quinone oxidoreductase subunit C (186 aa).

The tract at residues aspartate 166–glutamate 186 is disordered.

It belongs to the complex I 30 kDa subunit family. In terms of assembly, NDH-1 is composed of 14 different subunits. Subunits NuoB, C, D, E, F, and G constitute the peripheral sector of the complex.

It localises to the cell inner membrane. It catalyses the reaction a quinone + NADH + 5 H(+)(in) = a quinol + NAD(+) + 4 H(+)(out). Functionally, NDH-1 shuttles electrons from NADH, via FMN and iron-sulfur (Fe-S) centers, to quinones in the respiratory chain. The immediate electron acceptor for the enzyme in this species is believed to be ubiquinone. Couples the redox reaction to proton translocation (for every two electrons transferred, four hydrogen ions are translocated across the cytoplasmic membrane), and thus conserves the redox energy in a proton gradient. The sequence is that of NADH-quinone oxidoreductase subunit C from Neorickettsia sennetsu (strain ATCC VR-367 / Miyayama) (Ehrlichia sennetsu).